The primary structure comprises 214 residues: Probable nicotinate-nucleotide adenylyltransferase (214 aa).

This sequence belongs to the NadD family.

The catalysed reaction is nicotinate beta-D-ribonucleotide + ATP + H(+) = deamido-NAD(+) + diphosphate. It functions in the pathway cofactor biosynthesis; NAD(+) biosynthesis; deamido-NAD(+) from nicotinate D-ribonucleotide: step 1/1. In terms of biological role, catalyzes the reversible adenylation of nicotinate mononucleotide (NaMN) to nicotinic acid adenine dinucleotide (NaAD). The protein is Probable nicotinate-nucleotide adenylyltransferase of Buchnera aphidicola subsp. Acyrthosiphon pisum (strain 5A).